We begin with the raw amino-acid sequence, 278 residues long: MSTMYAASREALTQTRAALSSALGSVSAGAATAAAAQIGAELFSVVEILDEQRTLRSALSDTSTTGSVREGLAERVFGSKVSAETLAVVKSAAGQDWSVTSDLLNSLVLLGRESLLKAAADQGQLDAVEDELFRLGRIVAGDPKLEQSLSDRSVPAKGKRDLLSKLLYGKVTAVSEALATQAVGRLKNSAPADAFDELSNLAAAQRKAVVAKVRSAAPLSSEQSDRLTATLTRTYGKPVTVHVEVDPELLSGLVVRVGDEVIDGSGAGRLAALRKSLK.

This sequence belongs to the ATPase delta chain family. In terms of assembly, F-type ATPases have 2 components, F(1) - the catalytic core - and F(0) - the membrane proton channel. F(1) has five subunits: alpha(3), beta(3), gamma(1), delta(1), epsilon(1). F(0) has three main subunits: a(1), b(2) and c(10-14). The alpha and beta chains form an alternating ring which encloses part of the gamma chain. F(1) is attached to F(0) by a central stalk formed by the gamma and epsilon chains, while a peripheral stalk is formed by the delta and b chains.

The protein localises to the cell membrane. F(1)F(0) ATP synthase produces ATP from ADP in the presence of a proton or sodium gradient. F-type ATPases consist of two structural domains, F(1) containing the extramembraneous catalytic core and F(0) containing the membrane proton channel, linked together by a central stalk and a peripheral stalk. During catalysis, ATP synthesis in the catalytic domain of F(1) is coupled via a rotary mechanism of the central stalk subunits to proton translocation. Its function is as follows. This protein is part of the stalk that links CF(0) to CF(1). It either transmits conformational changes from CF(0) to CF(1) or is implicated in proton conduction. The chain is ATP synthase subunit delta from Rhodococcus opacus (strain B4).